A 221-amino-acid polypeptide reads, in one-letter code: 7-cyano-7-deazaguanine synthase (221 aa).

8–18 (LSGGMDSAAVI) is an ATP binding site. Residues Cys186, Cys196, Cys199, and Cys202 each coordinate Zn(2+).

It belongs to the QueC family. The cofactor is Zn(2+).

It carries out the reaction 7-carboxy-7-deazaguanine + NH4(+) + ATP = 7-cyano-7-deazaguanine + ADP + phosphate + H2O + H(+). The protein operates within purine metabolism; 7-cyano-7-deazaguanine biosynthesis. Catalyzes the ATP-dependent conversion of 7-carboxy-7-deazaguanine (CDG) to 7-cyano-7-deazaguanine (preQ(0)). This is 7-cyano-7-deazaguanine synthase from Stenotrophomonas maltophilia (strain K279a).